A 513-amino-acid polypeptide reads, in one-letter code: Na(+)/H(+) antiporter NhaB (513 aa).

The next 11 helical transmembrane spans lie at 21–41 (LCIITFLVINPLIYFFVSPFI), 43–63 (GWTLVAEFIFTLSMALKCYPL), 88–108 (IIANFEVILLLMFMVAGIYFM), 137–157 (AAFLSAFLDALTVIAVIISVG), 202–222 (LLMHAAVGSALGGVMTMVGEP), 235–255 (FIEFLIRVAPVSLPVLICGIA), 299–318 (MAIQALAGIWLIVGLALHLA), 322–344 (IIGLTIIIICTAFCGITDEHAIG), 350–370 (PMPFTALIVVFFTIVAVIVDL), 389–409 (LALFYVFNGLLSMISDNVFVG), and 477–497 (MALPYTIVLSIVGFFALEYLL).

Belongs to the NhaB Na(+)/H(+) (TC 2.A.34) antiporter family.

Its subcellular location is the cell inner membrane. The catalysed reaction is 2 Na(+)(in) + 3 H(+)(out) = 2 Na(+)(out) + 3 H(+)(in). Na(+)/H(+) antiporter that extrudes sodium in exchange for external protons. The protein is Na(+)/H(+) antiporter NhaB of Haemophilus ducreyi (strain 35000HP / ATCC 700724).